The primary structure comprises 544 residues: CTP synthase (544 aa).

The interval 1-266 (MSTKFIFVTG…DYFVCRRFHL (266 aa)) is amidoligase domain. S14 is a CTP binding site. A UTP-binding site is contributed by S14. ATP contacts are provided by residues 15–20 (SLGKGI) and D72. The Mg(2+) site is built by D72 and E140. Residues 147-149 (DIE), 187-192 (KTKPTQ), and K223 each bind CTP. UTP contacts are provided by residues 187–192 (KTKPTQ) and K223. Positions 291–542 (TIGMVGKYIE…VAAAHIHQKA (252 aa)) constitute a Glutamine amidotransferase type-1 domain. G352 contacts L-glutamine. The active-site Nucleophile; for glutamine hydrolysis is the C379. Residues 380–383 (LGMQ), E403, and R470 each bind L-glutamine. Catalysis depends on residues H515 and E517.

The protein belongs to the CTP synthase family. In terms of assembly, homotetramer.

It carries out the reaction UTP + L-glutamine + ATP + H2O = CTP + L-glutamate + ADP + phosphate + 2 H(+). The enzyme catalyses L-glutamine + H2O = L-glutamate + NH4(+). The catalysed reaction is UTP + NH4(+) + ATP = CTP + ADP + phosphate + 2 H(+). It participates in pyrimidine metabolism; CTP biosynthesis via de novo pathway; CTP from UDP: step 2/2. Allosterically activated by GTP, when glutamine is the substrate; GTP has no effect on the reaction when ammonia is the substrate. The allosteric effector GTP functions by stabilizing the protein conformation that binds the tetrahedral intermediate(s) formed during glutamine hydrolysis. Inhibited by the product CTP, via allosteric rather than competitive inhibition. In terms of biological role, catalyzes the ATP-dependent amination of UTP to CTP with either L-glutamine or ammonia as the source of nitrogen. Regulates intracellular CTP levels through interactions with the four ribonucleotide triphosphates. The sequence is that of CTP synthase from Pseudoalteromonas translucida (strain TAC 125).